Reading from the N-terminus, the 443-residue chain is Ribosomal protein uS12 methylthiotransferase RimO (443 aa).

Positions 9-119 constitute an MTTase N-terminal domain; sequence PKIGMVSLGC…VVSAVHDAAP (111 aa). [4Fe-4S] cluster is bound by residues cysteine 18, cysteine 54, cysteine 83, cysteine 150, cysteine 154, and cysteine 157. The Radical SAM core domain maps to 136–373; that stretch reads LTPRHYSYLK…MEKAAQISEA (238 aa). Residues 376–443 form the TRAM domain; it reads QAKIGRDIAT…EHDLFGVALS (68 aa).

The protein belongs to the methylthiotransferase family. RimO subfamily. The cofactor is [4Fe-4S] cluster.

The protein resides in the cytoplasm. The enzyme catalyses L-aspartate(89)-[ribosomal protein uS12]-hydrogen + (sulfur carrier)-SH + AH2 + 2 S-adenosyl-L-methionine = 3-methylsulfanyl-L-aspartate(89)-[ribosomal protein uS12]-hydrogen + (sulfur carrier)-H + 5'-deoxyadenosine + L-methionine + A + S-adenosyl-L-homocysteine + 2 H(+). Catalyzes the methylthiolation of an aspartic acid residue of ribosomal protein uS12. This Zymomonas mobilis subsp. mobilis (strain ATCC 31821 / ZM4 / CP4) protein is Ribosomal protein uS12 methylthiotransferase RimO.